The chain runs to 327 residues: Delta-aminolevulinic acid dehydratase (327 aa).

Positions 119, 121, and 129 each coordinate Zn(2+). The active-site Schiff-base intermediate with substrate is lysine 198. 5-aminolevulinate-binding residues include arginine 208 and arginine 220. Glutamate 236 contributes to the Mg(2+) binding site. The Schiff-base intermediate with substrate role is filled by lysine 251. Residues serine 277 and tyrosine 316 each contribute to the 5-aminolevulinate site.

This sequence belongs to the ALAD family. As to quaternary structure, homooctamer. Zn(2+) serves as cofactor.

It catalyses the reaction 2 5-aminolevulinate = porphobilinogen + 2 H2O + H(+). It functions in the pathway porphyrin-containing compound metabolism; protoporphyrin-IX biosynthesis; coproporphyrinogen-III from 5-aminolevulinate: step 1/4. In terms of biological role, catalyzes an early step in the biosynthesis of tetrapyrroles. Binds two molecules of 5-aminolevulinate per subunit, each at a distinct site, and catalyzes their condensation to form porphobilinogen. The polypeptide is Delta-aminolevulinic acid dehydratase (hemB) (Synechocystis sp. (strain ATCC 27184 / PCC 6803 / Kazusa)).